A 1355-amino-acid polypeptide reads, in one-letter code: Phosphoribosylformylglycinamidine synthase (1355 aa).

ATP is bound by residues 326-337 (GAETGTGGRLRD) and 406-408 (IGF). Residues E743, N747, and D911 each contribute to the Mg(2+) site. S913 contacts ATP. In terms of domain architecture, Glutamine amidotransferase type-1 spans 1087–1325 (KVAVIREEGS…LSWQWPFMPE (239 aa)). The active-site Nucleophile is C1182. Catalysis depends on residues H1310 and E1312.

In the N-terminal section; belongs to the FGAMS family.

The protein resides in the cytoplasm. It carries out the reaction N(2)-formyl-N(1)-(5-phospho-beta-D-ribosyl)glycinamide + L-glutamine + ATP + H2O = 2-formamido-N(1)-(5-O-phospho-beta-D-ribosyl)acetamidine + L-glutamate + ADP + phosphate + H(+). It participates in purine metabolism; IMP biosynthesis via de novo pathway; 5-amino-1-(5-phospho-D-ribosyl)imidazole from N(2)-formyl-N(1)-(5-phospho-D-ribosyl)glycinamide: step 1/2. In terms of biological role, phosphoribosylformylglycinamidine synthase involved in the purines biosynthetic pathway. Catalyzes the ATP-dependent conversion of formylglycinamide ribonucleotide (FGAR) and glutamine to yield formylglycinamidine ribonucleotide (FGAM) and glutamate. The protein is Phosphoribosylformylglycinamidine synthase (purL) of Dictyostelium discoideum (Social amoeba).